The primary structure comprises 724 residues: MVLTLLFSAYKLCRFFIMSGPRPGADRLTVPGPDRSGGTSPWWAAGGRGSREVSPGVGTEVQGALERSLPELQQALSELKQASAAQAVGAGLAEVFQLVEEAWLLPAVGREVAQGLCDAIRLDGGLDLLLRLLQAPELETRVQAARLLEQILVAENRDRVARIGLGVILNLSKEREPVELARSVAGILEHMFKHSEETCQRLVAAGGLDAVLYWCRRTDPALLRHCALALANCALHGGQTVQRCMVEKRAAEWLFPLAFSKEDELLRLHACLAVAVLATNKEVEREVEHSGTLALVEPLVASLDPGRFARCLVDASDTSQGRGPDDLQSLVLLLDSSRLEAQCIGAFYLCAEAAIKSLQGKTKVFSDIGAIQSLKRLVSYSTNGTTSTLAKRALRLLGEEVPRRILPCVASWKEAEVQTWLQQIGFSQYCENFRDQQVDGDLLLRLTDEELQTDLGMKSSITRKRFFRELTELKTFASYATCDRSNLADWLGSLDPRFRQYTYGLVSCGLDRSLLHRVSEQQLLEDCGIRLGVHRTRILSAAREMLHSPLPCTGGKPSGDTPDVFISYRRNSGSQLASLLKVHLQLHGFSVFIDVEKLEAGKFEDKLIQSVMAARNFVLVLSAGALDKCMQDHECKDWVHKEIVTALSCSKNIVPIIDGFEWPEPQALPEDMQAVLTFNGIKWSHEYQEATIEKIIRFLQGRPSQDSSAGSDTSLEGATSMGLP.

The N-terminal 27 residues, 1–27, are a transit peptide targeting the mitochondrion; that stretch reads MVLTLLFSAYKLCRFFIMSGPRPGADR. The stretch at 60–100 is one ARM 1 repeat; sequence EVQGALERSLPELQQALSELKQASAAQAVGAGLAEVFQLVE. NAD(+)-binding positions include Trp-103, Arg-110, 149–157, and 190–193; these read EQILVAENR and HMFK. 7 ARM repeats span residues 114 to 153, 155 to 193, 196 to 235, 237 to 280, 281 to 314, 315 to 354, and 359 to 402; these read QGLCDAIRLDGGLDLLLRLLQAPELETRVQAARLLEQILV, ENRDRVARIGLGVILNLSKEREPVELARSVAGILEHMFK, EETCQRLVAAGGLDAVLYWCRRTDPALLRHCALALANCAL, GGQT…LATN, KEVEREVEHSGTLALVEPLVASLDPGRFARCLVD, ASDTSQGRGPDDLQSLVLLLDSSRLEAQCIGAFYLCAEAA, and QGKT…EEVP. SAM domains lie at 412 to 476 and 486 to 548; these read WKEA…LKTF and NLAD…MLHS. Phosphoserine is present on residues Ser-548 and Ser-558. In terms of domain architecture, TIR spans 560–703; sequence DTPDVFISYR…KIIRFLQGRP (144 aa). Residues 569–570 and Glu-599 each bind NAD(+); that span reads RR. The active site involves Glu-642. Residues 703–717 are compositionally biased toward polar residues; sequence PSQDSSAGSDTSLEG. The tract at residues 703 to 724 is disordered; the sequence is PSQDSSAGSDTSLEGATSMGLP.

It belongs to the SARM1 family. Homooctamer; forms an octameric ring via SAM domains. Interacts with TICAM1/TRIF and thereby interferes with TICAM1/TRIF function. Interacts with MAPK10/JNK3 and SDC2 (via cytoplasmic domain). Post-translationally, phosphorylation at Ser-548 by JNK kinases (MAPK8, MAPK9 and /or MAPK10) enhance the NAD(+) hydrolase (NADase) activity. Phosphorylation at Ser-548 and subsequent activation takes place in response to oxidative stress conditions and inhibits mitochondrial respiration. Phosphorylation at Ser-548 increases in response to cerebral ischemia/reperfusion (I/R) injury.

Its subcellular location is the cytoplasm. It localises to the cell projection. It is found in the axon. The protein resides in the dendrite. The protein localises to the synapse. Its subcellular location is the mitochondrion. It catalyses the reaction NAD(+) + H2O = ADP-D-ribose + nicotinamide + H(+). It carries out the reaction NAD(+) = cyclic ADP-beta-D-ribose + nicotinamide + H(+). The catalysed reaction is NADP(+) + H2O = ADP-D-ribose 2'-phosphate + nicotinamide + H(+). Its activity is regulated as follows. Autoinhibited: in the inactive state, the enzymatic TIR domain is held apart by the autoinhibiting ARM repeats. NAD(+)-binding to ARM repeats maintains an inactive state by promoting interaction between ARM repeats and the TIR domain, thereby facilitating inhibition of the enzymatic TIR domain. Following activation, possibly by nicotinamide mononucleotide (NMN), auto-inhibitory interactions are released, allowing self-association of the TIR domains and subsequent activation of the NAD(+) hydrolase (NADase) activity. Self-association of TIR domains is facilitated by the octamer of SAM domains. In terms of biological role, NAD(+) hydrolase, which plays a key role in axonal degeneration following injury by regulating NAD(+) metabolism. Acts as a negative regulator of MYD88- and TRIF-dependent toll-like receptor signaling pathway by promoting Wallerian degeneration, an injury-induced form of programmed subcellular death which involves degeneration of an axon distal to the injury site. Wallerian degeneration is triggered by NAD(+) depletion: in response to injury, SARM1 is activated and catalyzes cleavage of NAD(+) into ADP-D-ribose (ADPR), cyclic ADPR (cADPR) and nicotinamide; NAD(+) cleavage promoting cytoskeletal degradation and axon destruction. Also able to hydrolyze NADP(+), but not other NAD(+)-related molecules. Can activate neuronal cell death in response to stress. Regulates dendritic arborization through the MAPK4-JNK pathway. Involved in innate immune response: inhibits both TICAM1/TRIF- and MYD88-dependent activation of JUN/AP-1, TRIF-dependent activation of NF-kappa-B and IRF3, and the phosphorylation of MAPK14/p38. This is NAD(+) hydrolase SARM1 from Rattus norvegicus (Rat).